A 335-amino-acid chain; its full sequence is Photosystem II assembly lipoprotein Ycf48 (335 aa).

A signal peptide spans 1 to 23; it reads MSRLFSNLFNLLLIAAIGFGLSG. Cys24 carries N-palmitoyl cysteine lipidation. Residue Cys24 is the site of S-diacylglycerol cysteine attachment.

Belongs to the Ycf48 family. As to quaternary structure, part of early PSII assembly complexes which includes D1 (psbA) and PsbI; not found in mature PSII. Binds to the lumenal side of PSII complexes. Interacts with YidC.

The protein localises to the cellular thylakoid membrane. A factor required for optimal assembly of photosystem II (PSII), acting in the early stages of PSII assembly. Also plays a role in replacement of photodamaged D1 (psbA). Assists YidC in synthesis of chlorophyll-binding proteins. The chain is Photosystem II assembly lipoprotein Ycf48 from Prochlorococcus marinus (strain MIT 9313).